A 177-amino-acid polypeptide reads, in one-letter code: Putative pre-16S rRNA nuclease (177 aa).

The segment at 1–20 (MVATQQGPDRPGIDDPGRGR) is disordered.

The protein belongs to the YqgF nuclease family.

The protein resides in the cytoplasm. Its function is as follows. Could be a nuclease involved in processing of the 5'-end of pre-16S rRNA. The polypeptide is Putative pre-16S rRNA nuclease (Rhodococcus erythropolis (strain PR4 / NBRC 100887)).